Consider the following 437-residue polypeptide: Eukaryotic peptide chain release factor subunit 1 (437 aa).

Glutamine 182 bears the N5-methylglutamine mark. Lysine 331 is covalently cross-linked (Glycyl lysine isopeptide (Lys-Gly) (interchain with G-Cter in ubiquitin)). Serine 421 carries the post-translational modification Phosphoserine.

Belongs to the eukaryotic release factor 1 family. As to quaternary structure, component of the eRF1-eRF3-GTP ternary complex, composed of SUP45/eRF1, SUP35/eRF3 and GTP. Interacts with TPA1. N5-methylated on Gln-182 by MTQ2.

Its subcellular location is the cytoplasm. Component of the eRF1-eRF3-GTP ternary complex, a ternary complex that mediates translation termination in response to the termination codons. The eRF1-eRF3-GTP complex binds to a stop codon in the ribosomal A-site. SUP45/eRF1 is responsible for stop codon recognition and inducing hydrolysis of peptidyl-tRNA. Following GTP hydrolysis by SUP35/eRF3, SUP35/eRF3 dissociates, permitting SUP45/eRF1 to accommodate fully in the A-site and mediate hydrolysis of peptidyl-tRNA. The sequence is that of Eukaryotic peptide chain release factor subunit 1 (SUP45) from Saccharomyces cerevisiae (strain ATCC 204508 / S288c) (Baker's yeast).